The sequence spans 269 residues: UPF0354 protein YtpQ (269 aa).

This sequence belongs to the UPF0354 family.

The sequence is that of UPF0354 protein YtpQ (ytpQ) from Bacillus subtilis (strain 168).